We begin with the raw amino-acid sequence, 197 residues long: Recombination protein RecR (197 aa).

The segment at 55-70 (CVQCRDFTESEICTIC) adopts a C4-type zinc-finger fold. The region spanning 78-173 (QQLCVVESPA…RPSRLAQGMP (96 aa)) is the Toprim domain.

It belongs to the RecR family.

In terms of biological role, may play a role in DNA repair. It seems to be involved in an RecBC-independent recombinational process of DNA repair. It may act with RecF and RecO. This is Recombination protein RecR from Xanthomonas axonopodis pv. citri (strain 306).